We begin with the raw amino-acid sequence, 145 residues long: D-aminoacyl-tRNA deacylase (145 aa).

The Gly-cisPro motif, important for rejection of L-amino acids motif lies at 137–138 (GP).

It belongs to the DTD family. As to quaternary structure, homodimer.

It localises to the cytoplasm. The enzyme catalyses glycyl-tRNA(Ala) + H2O = tRNA(Ala) + glycine + H(+). It catalyses the reaction a D-aminoacyl-tRNA + H2O = a tRNA + a D-alpha-amino acid + H(+). An aminoacyl-tRNA editing enzyme that deacylates mischarged D-aminoacyl-tRNAs. Also deacylates mischarged glycyl-tRNA(Ala), protecting cells against glycine mischarging by AlaRS. Acts via tRNA-based rather than protein-based catalysis; rejects L-amino acids rather than detecting D-amino acids in the active site. By recycling D-aminoacyl-tRNA to D-amino acids and free tRNA molecules, this enzyme counteracts the toxicity associated with the formation of D-aminoacyl-tRNA entities in vivo and helps enforce protein L-homochirality. The polypeptide is D-aminoacyl-tRNA deacylase (Shewanella woodyi (strain ATCC 51908 / MS32)).